The primary structure comprises 176 residues: Peptide methionine sulfoxide reductase MsrA (176 aa).

Cys14 is an active-site residue.

Belongs to the MsrA Met sulfoxide reductase family.

The enzyme catalyses L-methionyl-[protein] + [thioredoxin]-disulfide + H2O = L-methionyl-(S)-S-oxide-[protein] + [thioredoxin]-dithiol. The catalysed reaction is [thioredoxin]-disulfide + L-methionine + H2O = L-methionine (S)-S-oxide + [thioredoxin]-dithiol. Its function is as follows. Has an important function as a repair enzyme for proteins that have been inactivated by oxidation. Catalyzes the reversible oxidation-reduction of methionine sulfoxide in proteins to methionine. This chain is Peptide methionine sulfoxide reductase MsrA, found in Halalkalibacterium halodurans (strain ATCC BAA-125 / DSM 18197 / FERM 7344 / JCM 9153 / C-125) (Bacillus halodurans).